Here is a 556-residue protein sequence, read N- to C-terminus: Formate--tetrahydrofolate ligase (556 aa).

65–72 (TPAGEGKS) contributes to the ATP binding site.

It belongs to the formate--tetrahydrofolate ligase family.

The catalysed reaction is (6S)-5,6,7,8-tetrahydrofolate + formate + ATP = (6R)-10-formyltetrahydrofolate + ADP + phosphate. Its pathway is one-carbon metabolism; tetrahydrofolate interconversion. The chain is Formate--tetrahydrofolate ligase from Clostridium perfringens (strain ATCC 13124 / DSM 756 / JCM 1290 / NCIMB 6125 / NCTC 8237 / Type A).